A 506-amino-acid polypeptide reads, in one-letter code: Protein MGF 505-9R (506 aa).

Belongs to the asfivirus MGF 505 family.

In terms of biological role, plays a role in virus cell tropism, and may be required for efficient virus replication in macrophages. The sequence is that of Protein MGF 505-9R from African swine fever virus (isolate Tick/South Africa/Pretoriuskop Pr4/1996) (ASFV).